The following is a 261-amino-acid chain: Triosephosphate isomerase (261 aa).

Substrate is bound at residue 10-12; it reads NWK. Residue H100 is the Electrophile of the active site. E172 (proton acceptor) is an active-site residue. Residues G178, S218, and 239–240 contribute to the substrate site; that span reads GG.

It belongs to the triosephosphate isomerase family. Homodimer.

The protein resides in the cytoplasm. The catalysed reaction is D-glyceraldehyde 3-phosphate = dihydroxyacetone phosphate. It functions in the pathway carbohydrate biosynthesis; gluconeogenesis. Its pathway is carbohydrate degradation; glycolysis; D-glyceraldehyde 3-phosphate from glycerone phosphate: step 1/1. Involved in the gluconeogenesis. Catalyzes stereospecifically the conversion of dihydroxyacetone phosphate (DHAP) to D-glyceraldehyde-3-phosphate (G3P). This Mycobacterium sp. (strain JLS) protein is Triosephosphate isomerase.